Consider the following 429-residue polypeptide: UPF0597 protein AHA_1619 (429 aa).

This sequence belongs to the UPF0597 family.

This chain is UPF0597 protein AHA_1619, found in Aeromonas hydrophila subsp. hydrophila (strain ATCC 7966 / DSM 30187 / BCRC 13018 / CCUG 14551 / JCM 1027 / KCTC 2358 / NCIMB 9240 / NCTC 8049).